Here is a 212-residue protein sequence, read N- to C-terminus: Leucyl/phenylalanyl-tRNA--protein transferase (212 aa).

This sequence belongs to the L/F-transferase family.

It localises to the cytoplasm. The catalysed reaction is N-terminal L-lysyl-[protein] + L-leucyl-tRNA(Leu) = N-terminal L-leucyl-L-lysyl-[protein] + tRNA(Leu) + H(+). It carries out the reaction N-terminal L-arginyl-[protein] + L-leucyl-tRNA(Leu) = N-terminal L-leucyl-L-arginyl-[protein] + tRNA(Leu) + H(+). The enzyme catalyses L-phenylalanyl-tRNA(Phe) + an N-terminal L-alpha-aminoacyl-[protein] = an N-terminal L-phenylalanyl-L-alpha-aminoacyl-[protein] + tRNA(Phe). Its function is as follows. Functions in the N-end rule pathway of protein degradation where it conjugates Leu, Phe and, less efficiently, Met from aminoacyl-tRNAs to the N-termini of proteins containing an N-terminal arginine or lysine. This Allorhizobium ampelinum (strain ATCC BAA-846 / DSM 112012 / S4) (Agrobacterium vitis (strain S4)) protein is Leucyl/phenylalanyl-tRNA--protein transferase.